A 511-amino-acid polypeptide reads, in one-letter code: MSVELWQQCVELLRDELPAQQFNTWIRPLQVEAEGDELRVYAPNRFVLDWVNEKYLGRLLELLGEHGQGMAPALSLLIGSKRSSAPRAAPNAPLAAAASQALSANSVSSVSSSAPAMATPAAAVAVPAPVQNVAAHDEPSRDSFDPMAGASSQQAPARAEQRTVQVEGALKHTSYLNRTFTFENFVEGKSNQLARAAAWQVADNPKHGYNPLFLYGGVGLGKTHLMHAVGNHLLKKNPNAKVVYLHSERFVADMVKALQLNAINEFKRFYRSVDALLIDDIQFFARKERSQEEFFHTFNALLEGGQQVILTSDRYPKEIEGLEERLKSRFGWGLTVAVEPPELETRVAILMKKADQAKVDLPHDAAFFIAQRIRSNVRELEGALKRVIAHSHFMGRDITIELIRESLKDLLALQDKLVSVDNIQRTVAEYYKIKISDLLSKRRSRSVARPRQVAMALSKELTNHSLPEIGDVFGGRDHTTVLHACRKINELKESDADIREDYKNLLRTLTT.

The segment at 1–90 is domain I, interacts with DnaA modulators; it reads MSVELWQQCV…KRSSAPRAAP (90 aa). Positions 91–174 are domain II; sequence NAPLAAAASQ…QVEGALKHTS (84 aa). Positions 133-162 are disordered; the sequence is VAAHDEPSRDSFDPMAGASSQQAPARAEQR. Positions 135-144 are enriched in basic and acidic residues; that stretch reads AHDEPSRDSF. Positions 175 to 391 are domain III, AAA+ region; it reads YLNRTFTFEN…GALKRVIAHS (217 aa). Gly-219, Gly-221, Lys-222, and Thr-223 together coordinate ATP. The interval 392-511 is domain IV, binds dsDNA; the sequence is HFMGRDITIE…YKNLLRTLTT (120 aa).

The protein belongs to the DnaA family. Oligomerizes as a right-handed, spiral filament on DNA at oriC.

It localises to the cytoplasm. Plays an essential role in the initiation and regulation of chromosomal replication. ATP-DnaA binds to the origin of replication (oriC) to initiate formation of the DNA replication initiation complex once per cell cycle. Binds the DnaA box (a 9 base pair repeat at the origin) and separates the double-stranded (ds)DNA. Forms a right-handed helical filament on oriC DNA; dsDNA binds to the exterior of the filament while single-stranded (ss)DNA is stabiized in the filament's interior. The ATP-DnaA-oriC complex binds and stabilizes one strand of the AT-rich DNA unwinding element (DUE), permitting loading of DNA polymerase. After initiation quickly degrades to an ADP-DnaA complex that is not apt for DNA replication. Binds acidic phospholipids. The chain is Chromosomal replication initiator protein DnaA from Pseudomonas savastanoi pv. phaseolicola (strain 1448A / Race 6) (Pseudomonas syringae pv. phaseolicola (strain 1448A / Race 6)).